Consider the following 1263-residue polypeptide: Topoisomerase 1-associated factor 1 (1263 aa).

Disordered regions lie at residues 1042 to 1098 (ERQL…DDSQ) and 1178 to 1263 (VEES…DEEE). The segment covering 1060 to 1071 (TKGKARKKSKEK) has biased composition (basic residues). Over residues 1179-1189 (EESDNDDEVEE) the composition is skewed to acidic residues. Over residues 1211 to 1226 (VDTQQDLSDNTSNTSD) the composition is skewed to polar residues.

It belongs to the timeless family. As to quaternary structure, component of the fork protection complex (FPC) consisting of TOF1 and CSM3.

It is found in the nucleus. Functionally, forms a fork protection complex (FPC) with CSM3 and which is required for chromosome segregation during meiosis and DNA damage repair. FPC coordinates leading and lagging strand synthesis and moves with the replication fork. FPC stabilizes replication forks in a configuration that is recognized by replication checkpoint sensors. The sequence is that of Topoisomerase 1-associated factor 1 (YBL053) from Candida albicans (strain SC5314 / ATCC MYA-2876) (Yeast).